Reading from the N-terminus, the 131-residue chain is Translation initiation factor 5A (131 aa).

The residue at position 36 (K36) is a Hypusine.

This sequence belongs to the eIF-5A family. The N-terminus is blocked.

Its subcellular location is the cytoplasm. Functionally, functions by promoting the formation of the first peptide bond. The protein is Translation initiation factor 5A (eif5a) of Sulfolobus acidocaldarius (strain ATCC 33909 / DSM 639 / JCM 8929 / NBRC 15157 / NCIMB 11770).